We begin with the raw amino-acid sequence, 223 residues long: MAAAGGGGGGAAGRAYSFKVVLLGEGCVGKTSLVLRYCENKFNDKHITTLQASFLTKKLNIGGKRVNLAIWDTAGQERFHALGPIYYRDSNGAILVYDITDEDSFQKVKNWVKELRKMLGNEICLCIVGNKIDLEKERHVSIQEAESYAESVGAKHYHTSAKQNKGIEELFLDLCKRMIETAQVDERAKGNGSSQPGAARRGVQIIDDEPQAQSSGGGCCSSG.

Ala2 is subject to N-acetylalanine. GTP contacts are provided by Gly26, Gly29, Lys30, Thr31, Ser32, Asn43, Asp44, His46, Thr48, and Thr49. Thr31 lines the Mg(2+) pocket. The Switch 1 motif lies at 41–54 (KFNDKHITTLQASF). The Mg(2+) site is built by Thr49 and Asp72. A Switch 2 motif is present at residues 74–92 (AGQERFHALGPIYYRDSNG). Gly75, Asn130, Lys131, Asp133, Ala161, and Lys162 together coordinate GTP. Residues Cys219 and Cys220 are each lipidated (S-geranylgeranyl cysteine). Position 220 is a cysteine methyl ester (Cys220). A propeptide spans 221-223 (SSG) (removed in mature form).

It belongs to the small GTPase superfamily. Rab family. Interacts with the cytoplasmic tail of integrins ITGA1, ITGA2, ITGA5, ITGA6, ITGA11 and ITGB1; this interaction is dependent upon its GDP/GTP cycle. Interacts with ANKRD27. Interacts (active GTP-bound form) with TMED10; the interaction is indirect and regulates TMED10 abundance and localization at the Golgi. Mg(2+) is required as a cofactor.

The protein localises to the endoplasmic reticulum membrane. It is found in the golgi apparatus. The protein resides in the trans-Golgi network. Its subcellular location is the golgi apparatus membrane. It localises to the early endosome membrane. The protein localises to the cytoplasmic vesicle membrane. It is found in the cleavage furrow. The protein resides in the cell projection. Its subcellular location is the neuron projection. The enzyme catalyses GTP + H2O = GDP + phosphate + H(+). With respect to regulation, regulated by guanine nucleotide exchange factors (GEFs) including ANKRD27 and RABGEF1, which promote the exchange of bound GDP for free GTP. Regulated by GTPase activating proteins (GAPs) which increase the GTP hydrolysis activity. Inhibited by GDP dissociation inhibitors (GDIs). The small GTPases Rab are key regulators of intracellular membrane trafficking, from the formation of transport vesicles to their fusion with membranes. Rabs cycle between an inactive GDP-bound form and an active GTP-bound form that is able to recruit to membranes different sets of downstream effectors directly responsible for vesicle formation, movement, tethering and fusion. RAB21 is involved in membrane trafficking control. Regulates integrin internalization and recycling, but does not influence the traffic of endosomally translocated receptors in general. As a result, may regulate cell adhesion and migration. During the mitosis of adherent cells, controls the endosomal trafficking of integrins which is required for the successful completion of cytokinesis. Involved in neurite growth. Modulates protein levels of the cargo receptors TMED2 and TMED10, and required for appropriate Golgi localization of TMED10. This Canis lupus familiaris (Dog) protein is Ras-related protein Rab-21 (RAB21).